Reading from the N-terminus, the 424-residue chain is Dihydroorotase-like protein (424 aa).

Belongs to the metallo-dependent hydrolases superfamily. DHOase family. PyrC' subfamily. Heterododecamer of 6 active PyrB subunits and 6 non-catalytic PyrC' subunits.

Functionally, non-functional DHOase. This is Dihydroorotase-like protein from Pseudomonas putida (Arthrobacter siderocapsulatus).